Here is a 155-residue protein sequence, read N- to C-terminus: Basic phospholipase A2 PC9 (155 aa).

The N-terminal stretch at 1-21 (MYPAHLLVLLAVCVSLLGASA) is a signal peptide. Residues 22-27 (ISPRPL) constitute a propeptide that is removed on maturation. Intrachain disulfides connect cysteine 38–cysteine 98, cysteine 54–cysteine 144, cysteine 56–cysteine 72, cysteine 71–cysteine 125, cysteine 78–cysteine 118, cysteine 87–cysteine 111, and cysteine 105–cysteine 116. 3 residues coordinate Ca(2+): tyrosine 55, glycine 57, and glycine 59. Histidine 75 is a catalytic residue. Aspartate 76 lines the Ca(2+) pocket. Aspartate 119 is an active-site residue.

It belongs to the phospholipase A2 family. Group I subfamily. D49 sub-subfamily. Ca(2+) serves as cofactor. In terms of tissue distribution, expressed by the venom gland.

It localises to the secreted. It catalyses the reaction a 1,2-diacyl-sn-glycero-3-phosphocholine + H2O = a 1-acyl-sn-glycero-3-phosphocholine + a fatty acid + H(+). In terms of biological role, snake venom phospholipase A2 (PLA2) that inhibits neuromuscular transmission by blocking acetylcholine release from the nerve termini. PLA2 catalyzes the calcium-dependent hydrolysis of the 2-acyl groups in 3-sn-phosphoglycerides. The polypeptide is Basic phospholipase A2 PC9 (Laticauda colubrina (Yellow-lipped sea krait)).